We begin with the raw amino-acid sequence, 233 residues long: Phosphatidylserine decarboxylase proenzyme (233 aa).

The active-site Schiff-base intermediate with substrate; via pyruvic acid is the Ser188. A Pyruvic acid (Ser); by autocatalysis modification is found at Ser188.

This sequence belongs to the phosphatidylserine decarboxylase family. PSD-A subfamily. As to quaternary structure, heterodimer of a large membrane-associated beta subunit and a small pyruvoyl-containing alpha subunit. It depends on pyruvate as a cofactor. Is synthesized initially as an inactive proenzyme. Formation of the active enzyme involves a self-maturation process in which the active site pyruvoyl group is generated from an internal serine residue via an autocatalytic post-translational modification. Two non-identical subunits are generated from the proenzyme in this reaction, and the pyruvate is formed at the N-terminus of the alpha chain, which is derived from the carboxyl end of the proenzyme. The post-translation cleavage follows an unusual pathway, termed non-hydrolytic serinolysis, in which the side chain hydroxyl group of the serine supplies its oxygen atom to form the C-terminus of the beta chain, while the remainder of the serine residue undergoes an oxidative deamination to produce ammonia and the pyruvoyl prosthetic group on the alpha chain.

The protein localises to the cell membrane. It catalyses the reaction a 1,2-diacyl-sn-glycero-3-phospho-L-serine + H(+) = a 1,2-diacyl-sn-glycero-3-phosphoethanolamine + CO2. It functions in the pathway phospholipid metabolism; phosphatidylethanolamine biosynthesis; phosphatidylethanolamine from CDP-diacylglycerol: step 2/2. Its function is as follows. Catalyzes the formation of phosphatidylethanolamine (PtdEtn) from phosphatidylserine (PtdSer). This is Phosphatidylserine decarboxylase proenzyme from Ruegeria sp. (strain TM1040) (Silicibacter sp.).